The following is a 400-amino-acid chain: Subtilisin-like protease 11 (400 aa).

Residues 1 to 19 (MGLFKVIFTAVAALSAVDA) form the signal peptide. The propeptide occupies 20–117 (AELLSSAKSK…VEHDRHVYIS (98 aa)). The Inhibitor I9 domain maps to 35–116 (SYLVVMKDSV…FVEHDRHVYI (82 aa)). The Peptidase S8 domain maps to 127 to 400 (SWGLGRVSHR…NKLLYNGSGK (274 aa)). The N-linked (GlcNAc...) asparagine glycan is linked to asparagine 138. Aspartate 159 acts as the Charge relay system in catalysis. Asparagine 181 is a glycosylation site (N-linked (GlcNAc...) asparagine). Histidine 191 acts as the Charge relay system in catalysis. 2 N-linked (GlcNAc...) asparagine glycosylation sites follow: asparagine 252 and asparagine 337. Serine 346 serves as the catalytic Charge relay system. 2 N-linked (GlcNAc...) asparagine glycosylation sites follow: asparagine 388 and asparagine 396.

This sequence belongs to the peptidase S8 family.

Its subcellular location is the secreted. Its function is as follows. Secreted subtilisin-like serine protease with keratinolytic activity that contributes to pathogenicity. This chain is Subtilisin-like protease 11 (SUB11), found in Arthroderma benhamiae (strain ATCC MYA-4681 / CBS 112371) (Trichophyton mentagrophytes).